We begin with the raw amino-acid sequence, 118 residues long: uncharacterized protein (118 aa).

This is an uncharacterized protein from Bacillus subtilis (strain 168).